Reading from the N-terminus, the 467-residue chain is Gustatory and odorant receptor 22 (467 aa).

The Cytoplasmic segment spans residues 1-106 (MIHTQMEDAQ…MPRTTFTWCS (106 aa)). Residues 107–127 (KAFLWAYFIYACETVIVLVVA) traverse the membrane as a helical segment. At 128 to 144 (RERINKFISTSDKRFDE) the chain is on the extracellular side. A helical membrane pass occupies residues 145-165 (VIYNIIFMSIMVPHFLLPVAS). At 166–198 (WRNGSEVAKFKNMWTDFQYKYLIVTGKPIVFPK) the chain is on the cytoplasmic side. A helical transmembrane segment spans residues 199 to 219 (LYPITWTLCIVSWSLSLVIIL). Topologically, residues 220–238 (SQYYLQPDFQFCHTFAYYH) are extracellular. The chain crosses the membrane as a helical span at residues 239–259 (IIAMLNGFCSLWFVNCTAFGT). Over 260 to 304 (ASKAFAKELTDVLATERPAAKLTEYRHLWVDLSHMMQQLGKAYSN) the chain is Cytoplasmic. The chain crosses the membrane as a helical span at residues 305 to 325 (MYGIYCLVIFFTTIIATYGSL). Topologically, residues 326-337 (SEIIEHGATYKE) are extracellular. The chain crosses the membrane as a helical span at residues 338 to 358 (VGLFVIVFYCMSLLFIICNEA). At 359–414 (HHASKRVGLNFQERLLNVNLTAVDKATQKEVEMFLVAIDKNPPTMNLDGYANINRG) the chain is on the cytoplasmic side. Residues 415–435 (LITSNISFMATYLVVLMQFKL) form a helical membrane-spanning segment. Topologically, residues 436–467 (TLLRQSAKNAFISALKANLSRIRSLDADKVNT) are extracellular. The N-linked (GlcNAc...) asparagine glycan is linked to Asn-453.

Belongs to the insect chemoreceptor superfamily. Gustatory receptor (GR) family. Gr21a subfamily. In terms of tissue distribution, carbon dioxide-responsive neurons coexpress GPRgr22 and GPRgr24 in the maxillary palp at both larval and adult life stages.

Its subcellular location is the cell membrane. In terms of biological role, gustatory receptor which mediates acceptance or avoidance behavior, depending on its substrates. GPRgr22 and GPRgr24 together are sufficient for olfactory carbon dioxide-chemosensation. The protein is Gustatory and odorant receptor 22 of Anopheles gambiae (African malaria mosquito).